The chain runs to 515 residues: Maturase K (515 aa).

This sequence belongs to the intron maturase 2 family. MatK subfamily.

The protein resides in the plastid. The protein localises to the chloroplast. Usually encoded in the trnK tRNA gene intron. Probably assists in splicing its own and other chloroplast group II introns. This is Maturase K from Pinus attenuata (Knobcone pine).